Consider the following 528-residue polypeptide: RNA polymerase sigma factor SigA (528 aa).

Polar residues predominate over residues 1–10 (MAATKASTAT). The tract at residues 1 to 211 (MAATKASTAT…FVWDEDESEA (211 aa)) is disordered. Low complexity-rich tracts occupy residues 19 to 31 (TKSP…GAKT), 38 to 56 (AKSA…PAAR), and 80 to 92 (AAKS…PSAR). Residues 100–109 (APKDAQHEAA) are compositionally biased toward basic and acidic residues. Residues 110–173 (TDPEDALDSV…DDEDHEDLEA (64 aa)) are compositionally biased toward acidic residues. Positions 295–365 (LLEANLRLVV…TRAMADQART (71 aa)) are sigma-70 factor domain-2. The Interaction with polymerase core subunit RpoC motif lies at 319–322 (DLIQ). Residues 374 to 450 (EVINKLGRIQ…DSEAVVAVDA (77 aa)) form a sigma-70 factor domain-3 region. Residues 463–516 (VLDTLSEREAGVVRLRFGLTDGQPRTLDEIGQVYGVTRERIRQIESKTMSKLRH) are sigma-70 factor domain-4. The H-T-H motif DNA-binding region spans 489–508 (LDEIGQVYGVTRERIRQIES).

This sequence belongs to the sigma-70 factor family. RpoD/SigA subfamily. Interacts transiently with the RNA polymerase catalytic core.

It localises to the cytoplasm. Its function is as follows. Sigma factors are initiation factors that promote the attachment of RNA polymerase to specific initiation sites and are then released. This sigma factor is the primary sigma factor during exponential growth. The sequence is that of RNA polymerase sigma factor SigA from Mycobacterium bovis (strain ATCC BAA-935 / AF2122/97).